Here is a 676-residue protein sequence, read N- to C-terminus: Capsid vertex component 1 (676 aa).

The segment covering 253 to 264 has biased composition (low complexity); sequence HPVRPSSSRVAS. Residues 253-308 are disordered; that stretch reads HPVRPSSSRVASGLLQSAKGHGAQTSNTDPINNGSFDGVLEPPGQGRFTGKKNNSS. Residues 275-287 are compositionally biased toward polar residues; sequence AQTSNTDPINNGS.

It belongs to the herpesviridae CVC1 protein family. As to quaternary structure, interacts (via C-terminus) with capsid vertex component 2/CVC2.

The protein localises to the virion. It localises to the host nucleus. Functionally, capsid vertex-specific component that plays a role during viral DNA encapsidation, assuring correct genome cleavage and presumably stabilizing capsids that contain full-length viral genomes. This Varicella-zoster virus (strain Dumas) (HHV-3) protein is Capsid vertex component 1.